The following is a 547-amino-acid chain: Cytochrome P450 monooxygenase 128 (547 aa).

A helical membrane pass occupies residues 9–25 (IPWAAGATLLAWAAYKI). Asn-336 and Asn-438 each carry an N-linked (GlcNAc...) asparagine glycan. Cys-483 provides a ligand contact to heme.

This sequence belongs to the cytochrome P450 family. Requires heme as cofactor.

Its subcellular location is the membrane. It participates in secondary metabolite biosynthesis. Its function is as follows. Cytochrome P450 monooxygenase that is able to use 7-ethoxycoumarin and testosterone as substrates for oxidation. This chain is Cytochrome P450 monooxygenase 128, found in Postia placenta (strain ATCC 44394 / Madison 698-R) (Brown rot fungus).